Reading from the N-terminus, the 1869-residue chain is Chitin synthase 6 (1869 aa).

Residues 1-23 are disordered; the sequence is MAMNLPPLAGSGGAHTQPSLPAL. Positions 1–778 constitute a Myosin motor domain; sequence MAMNLPPLAG…EIAHLSEASL (778 aa). ATP is bound at residue 104 to 111; that stretch reads GESGSGKS. Residues asparagine 123, asparagine 417, asparagine 426, and asparagine 557 are each glycosylated (N-linked (GlcNAc...) asparagine). 2 disordered regions span residues 593 to 612 and 620 to 640; these read KPMRTPSVMSRKTARTARNQ and AEEELEKLSENNSQAGGAAKA. Low complexity predominate over residues 629-640; sequence ENNSQAGGAAKA. Residues asparagine 630 and asparagine 657 are each glycosylated (N-linked (GlcNAc...) asparagine). The interval 655-679 is actin-binding; the sequence is LDNVTKAVADPSTNSYFVFCLKPND. Helical transmembrane passes span 886-906 and 925-945; these read WLFMVYLLTWFIPDFLIRFIG and LIIWLSCLLAAFFIVVFPMLI. In terms of domain architecture, Cytochrome b5 heme-binding spans 949-1010; the sequence is QHVYSAAELS…YAGKDATSLF (62 aa). Asparagine 1037, asparagine 1062, and asparagine 1165 each carry an N-linked (GlcNAc...) asparagine glycan. The chain crosses the membrane as a helical span at residues 1201–1221; sequence LVLAISIMLVTIIAFKFFAAL. N-linked (GlcNAc...) asparagine glycosylation is found at asparagine 1458 and asparagine 1564. Helical transmembrane passes span 1596–1616, 1622–1642, and 1649–1669; these read LSTVLQPVTMAYIVYLIVMVI, VPVTAFILIAAVFGLQAIIFI, and MIGWMVLYILAIPVFSFGLPL. The N-linked (GlcNAc...) asparagine glycan is linked to asparagine 1778. Residues 1811–1866 enclose the DEK-C domain; the sequence is LPSDDALLAEIREILRTADLMTVTKKGIKQELERRFGVPLDAKRAYINSATEALLS.

It in the N-terminal section; belongs to the TRAFAC class myosin-kinesin ATPase superfamily. Myosin family. In the C-terminal section; belongs to the chitin synthase family. Class V subfamily.

Its subcellular location is the cell membrane. It catalyses the reaction [(1-&gt;4)-N-acetyl-beta-D-glucosaminyl](n) + UDP-N-acetyl-alpha-D-glucosamine = [(1-&gt;4)-N-acetyl-beta-D-glucosaminyl](n+1) + UDP + H(+). Functionally, polymerizes chitin, a structural polymer of the cell wall and septum, by transferring the sugar moiety of UDP-GlcNAc to the non-reducing end of the growing chitin polymer. Plays a role in cell wall integrity and is involved in tolerance to hyperosmotic conditions. Required to successfully penetrate the host plants and thus plays a key role in pathogenicity. The chain is Chitin synthase 6 from Verticillium dahliae (strain VdLs.17 / ATCC MYA-4575 / FGSC 10137) (Verticillium wilt).